A 109-amino-acid chain; its full sequence is Head completion protein gp16 (109 aa).

Belongs to the Caudoviricetes gp7/gp16 head completion protein family. As to quaternary structure, homododecamer. Interacts with the connector protein gp15. Interacts with the head-tail joining protein gp17.

The protein resides in the virion. Functionally, functions as a stopper that is part of the head-tail connector and that locks the viral DNA in the capsid. Following tail attachment to the entry receptor, seems to open by a diaphragm-like motion, allowing the genome to exit the capsid through the tail tube to the host cell. During assembly, functions as a docking platform which the preassembled tail tapered by the head-tail joining protein gp17 can bind to. This chain is Head completion protein gp16 (16), found in Bacillus subtilis (Bacteriophage SPP1).